The chain runs to 263 residues: Endonuclease 8 (263 aa).

The Schiff-base intermediate with DNA role is filled by Pro2. Catalysis depends on Glu3, which acts as the Proton donor. Lys53 (proton donor; for beta-elimination activity) is an active-site residue. Gln70, Arg125, and Asn169 together coordinate DNA. The FPG-type zinc-finger motif lies at 229–263; the sequence is KVFHRDGERCERCGGVIEKTTLSSRPFYWCPGCQH. Arg253 functions as the Proton donor; for delta-elimination activity in the catalytic mechanism.

This sequence belongs to the FPG family. It depends on Zn(2+) as a cofactor.

It carries out the reaction 2'-deoxyribonucleotide-(2'-deoxyribose 5'-phosphate)-2'-deoxyribonucleotide-DNA = a 3'-end 2'-deoxyribonucleotide-(2,3-dehydro-2,3-deoxyribose 5'-phosphate)-DNA + a 5'-end 5'-phospho-2'-deoxyribonucleoside-DNA + H(+). Its function is as follows. Involved in base excision repair of DNA damaged by oxidation or by mutagenic agents. Acts as a DNA glycosylase that recognizes and removes damaged bases. Has a preference for oxidized pyrimidines, such as thymine glycol, 5,6-dihydrouracil and 5,6-dihydrothymine. Has AP (apurinic/apyrimidinic) lyase activity and introduces nicks in the DNA strand. Cleaves the DNA backbone by beta-delta elimination to generate a single-strand break at the site of the removed base with both 3'- and 5'-phosphates. This chain is Endonuclease 8, found in Klebsiella pneumoniae (strain 342).